Reading from the N-terminus, the 137-residue chain is Hemoglobin subunit alpha-2 (137 aa).

The Globin domain occupies 1 to 137 (DDRSHILAIW…VGGSLTSKYR (137 aa)). Position 54 (H54) interacts with O2. Residue H83 participates in heme b binding.

It belongs to the globin family. Post-translationally, the N-terminus of the mature protein is acetylated. In terms of tissue distribution, red blood cells.

This is Hemoglobin subunit alpha-2 from Telmatobius peruvianus (Andean frog).